A 314-amino-acid chain; its full sequence is tRNA pseudouridine synthase B (314 aa).

Histidine 43 is a binding site for substrate. The Nucleophile role is filled by aspartate 48. Residues tyrosine 76, tyrosine 179, and leucine 200 each coordinate substrate.

Belongs to the pseudouridine synthase TruB family. Type 1 subfamily.

It catalyses the reaction uridine(55) in tRNA = pseudouridine(55) in tRNA. In terms of biological role, responsible for synthesis of pseudouridine from uracil-55 in the psi GC loop of transfer RNAs. The polypeptide is tRNA pseudouridine synthase B (Salmonella paratyphi A (strain ATCC 9150 / SARB42)).